An 83-amino-acid chain; its full sequence is Apolipoprotein C-I, acidic form (83 aa).

Residues 1–26 form the signal peptide; it reads MRLFLSLPVLVVVLSMVLEGPAPAQG.

This sequence belongs to the apolipoprotein C1 family.

The protein localises to the secreted. This chain is Apolipoprotein C-I, acidic form (APOC1A), found in Gorilla gorilla gorilla (Western lowland gorilla).